Reading from the N-terminus, the 268-residue chain is N-formylmaleamate deformylase (268 aa).

The region spanning 28-251 (ALILVPGITS…NAGHMIPWDD (224 aa)) is the AB hydrolase-1 domain. Active-site charge relay system residues include Ser-101, Glu-221, and His-245.

The catalysed reaction is N-formylmaleamate + H2O = maleamate + formate + H(+). It functions in the pathway cofactor degradation; nicotinate degradation. Functionally, deformylase that catalyzes the conversion of N-formylmaleamic acid to maleamate in the aerobic nicotinate degradation pathway. The polypeptide is N-formylmaleamate deformylase (nicD) (Pseudomonas putida (strain ATCC 47054 / DSM 6125 / CFBP 8728 / NCIMB 11950 / KT2440)).